The primary structure comprises 215 residues: Eukaryotic translation initiation factor 4E (215 aa).

The disordered stretch occupies residues 1-27; it reads MAERDSEPRVNIIRPDDEPEVEEERVP. The residue at position 207 (S207) is a Phosphoserine; by PKC.

This sequence belongs to the eukaryotic initiation factor 4E family. EIF4F is a multi-subunit complex, the composition of which varies with external and internal environmental conditions. It is composed of at least eIF4A, eIF4E and eIF4G. eIF4E is also known to interact with other partners. Phosphorylation increases the ability of the protein to bind to mRNA caps and to form the eIF4F complex.

In terms of biological role, recognizes and binds the 7-methylguanosine-containing mRNA cap during an early step in the initiation of protein synthesis and facilitates ribosome binding by inducing the unwinding of the mRNAs secondary structures. This is Eukaryotic translation initiation factor 4E from Aplysia californica (California sea hare).